Consider the following 133-residue polypeptide: DNA-binding protein StpA (133 aa).

Positions 81 to 115 (AMPRSAKKRQPRPAKYRFTDFNGEEKTWTGQGRTP) are disordered. Positions 85-95 (SAKKRQPRPAK) are enriched in basic residues. Residues 111 to 116 (QGRTPK) mediate DNA binding.

It belongs to the histone-like protein H-NS family. In terms of assembly, forms homodimers, can interact with H-NS.

It is found in the cytoplasm. It localises to the nucleoid. Its function is as follows. A DNA-binding protein that acts in a fashion similar to H-NS, repressing gene transcription. A subset of H-NS/StpA-regulated genes require auxillary proteins for repression; these auxillary proteins (Hha and other similar proteins) may also modulate oligomerization of the H-NS/StpA complex. This chain is DNA-binding protein StpA (stpA), found in Salmonella typhi.